We begin with the raw amino-acid sequence, 488 residues long: MKFKDLRDFVQQLEQRGELKRIQMPISPVLEMTEICDRTLRNKGPALLFENPTGFDIPVLGNLFGTPERVAFGMGAESVSELREIGKLLAFLKEPEPPKGLKDAWSKLPIFRKIIAMAPKVVKDAVCQEVVIEGEDVDLAMLPVQTCWPGDVGPLITWGLTVTKGPNKDRQNLGIYRQQVIGRNKVIMRWLSHRGGALDFREWCEKHPGKPFPVSVALGADPATILGAVTPVPDSLSEYAFAGLLRGNRTELVKCRGNDLQVPATAEIILEGVIHPGEMADEGPYGDHTGYYNEVDSFPVFTVERITHRIKPIYHSTYTGRPPDEPAILGVALNEVFVPILQKQFPEITDFYLPPEGCSYRMAIVTMKKSYPGHAKRVMLGVWSFLRQFMYTKFVIVTDDDINARDWNDVIWAITTRMDPKRDTVMIDNTPIDYLDFASPVSGLGSKMGLDATHKWPGETTREWGRVIVKDEAVTARVDAIWKELGID.

Mn(2+) is bound at residue Asn172. Residues 175-177 (IYR), 189-191 (RWL), and 194-195 (RG) each bind prenylated FMN. Glu238 serves as a coordination point for Mn(2+). The active-site Proton donor is Asp287.

The protein belongs to the UbiD family. Homohexamer. Prenylated FMN is required as a cofactor. Requires Mn(2+) as cofactor.

Its subcellular location is the cell membrane. It catalyses the reaction a 4-hydroxy-3-(all-trans-polyprenyl)benzoate + H(+) = a 2-(all-trans-polyprenyl)phenol + CO2. It participates in cofactor biosynthesis; ubiquinone biosynthesis. In terms of biological role, catalyzes the decarboxylation of 3-octaprenyl-4-hydroxy benzoate to 2-octaprenylphenol, an intermediate step in ubiquinone biosynthesis. This chain is 3-octaprenyl-4-hydroxybenzoate carboxy-lyase, found in Pseudomonas fluorescens (strain SBW25).